Reading from the N-terminus, the 539-residue chain is Chaperonin GroEL (539 aa).

Residues 29 to 32 (TLGP), 86 to 90 (DGTTT), G413, 476 to 478 (NAA), and D492 contribute to the ATP site.

The protein belongs to the chaperonin (HSP60) family. As to quaternary structure, forms a cylinder of 14 subunits composed of two heptameric rings stacked back-to-back. Interacts with the co-chaperonin GroES.

Its subcellular location is the cytoplasm. It carries out the reaction ATP + H2O + a folded polypeptide = ADP + phosphate + an unfolded polypeptide.. Functionally, together with its co-chaperonin GroES, plays an essential role in assisting protein folding. The GroEL-GroES system forms a nano-cage that allows encapsulation of the non-native substrate proteins and provides a physical environment optimized to promote and accelerate protein folding. The protein is Chaperonin GroEL of Geobacillus sp. (strain WCH70).